A 485-amino-acid polypeptide reads, in one-letter code: MSLKLKTIKSTKWSALSSLTIIVLGFLQMVILSRILEPFEFGVLSIMTVVFLFTDMLADCGLSNAIIQKKNITLDELSALYWVNIFLGVFLFVVTIILSYEISSWMRLDRLSFLIQLTALVFIIMPHGQQYRALMQKELEFDILSKIESFSYLTGFCLTVIIGIITKNASCAVFGYLLTVSMRTVILSFVGRKYYHPTWKRSKLREIKKQLLFSFYLTLDSILNYINSSITTPIVARVLGAIYVGGYNLSFNVAVNPPSKISPIITRVLFPALSKIQDDKERLRINFFKLLHVISYINFPALLGLCIIAKDFVYLVFGEKWLFIVPTLQLLCIAGAMRMVANPIGSLLMAKAKMELSVRFNFVKIIIFIPVLYFSTIWNGMVGAAIGFLICQAINALLSYFFLLKPVLGNCIVDYINSFFIPFVHTLPMILLLLVCDIYIDKISLTFFILKIVIGGGVYILTIFISPNKLLAEMKGLFRQLLLKS.

A run of 13 helical transmembrane segments spans residues 13–33 (WSALSSLTIIVLGFLQMVILS), 38–58 (PFEFGVLSIMTVVFLFTDMLA), 79–99 (ALYWVNIFLGVFLFVVTIILS), 111–131 (LSFLIQLTALVFIIMPHGQQY), 160–180 (VIIGIITKNASCAVFGYLLTV), 211–231 (LLFSFYLTLDSILNYINSSIT), 234–254 (IVARVLGAIYVGGYNLSFNVA), 297–317 (INFPALLGLCIIAKDFVYLVF), 321–341 (WLFIVPTLQLLCIAGAMRMVA), 365–385 (IIIFIPVLYFSTIWNGMVGAA), 388–408 (FLICQAINALLSYFFLLKPVL), 420–440 (FIPFVHTLPMILLLLVCDIYI), and 445–465 (LTFFILKIVIGGGVYILTIFI).

Belongs to the polysaccharide synthase family.

The protein localises to the cell membrane. This is an uncharacterized protein from Klebsiella pneumoniae.